We begin with the raw amino-acid sequence, 1436 residues long: DNA-directed RNA polymerase subunit beta (1436 aa).

The protein belongs to the RNA polymerase beta chain family. In terms of assembly, the RNAP catalytic core consists of 2 alpha, 1 beta, 1 beta' and 1 omega subunit. When a sigma factor is associated with the core the holoenzyme is formed, which can initiate transcription.

The enzyme catalyses RNA(n) + a ribonucleoside 5'-triphosphate = RNA(n+1) + diphosphate. DNA-dependent RNA polymerase catalyzes the transcription of DNA into RNA using the four ribonucleoside triphosphates as substrates. The polypeptide is DNA-directed RNA polymerase subunit beta (Wolbachia pipientis).